The following is a 683-amino-acid chain: Cysteine-rich receptor-like protein kinase 28 (683 aa).

The N-terminal stretch at 1–24 (MEHVRVIFFFFACVLKIVPFICLA) is a signal peptide. Residues 25-288 (QKDKYEFPPG…RTGKGKGGSK (264 aa)) lie on the Extracellular side of the membrane. Gnk2-homologous domains follow at residues 32–136 (PPGF…NMII) and 142–251 (TTPT…TWRF). N-linked (GlcNAc...) asparagine glycans are attached at residues Asn-43, Asn-47, Asn-73, and Asn-153. Residues 263 to 283 (PAIQPADSPTSAARTERTGKG) are disordered. The chain crosses the membrane as a helical span at residues 289–309 (VIVAIVIPIVFVALFAICLCL). The Cytoplasmic portion of the chain corresponds to 310-683 (LLKWKKNKSV…DVTVSELSPR (374 aa)). The 281-residue stretch at 361 to 641 (FSPENELGRG…ALMLNSYSYT (281 aa)) folds into the Protein kinase domain. ATP is bound by residues 367-375 (LGRGGFGSV) and Lys-389. At Tyr-434 the chain carries Phosphotyrosine. Asp-486 functions as the Proton acceptor in the catalytic mechanism. Position 490 is a phosphoserine (Ser-490). Phosphothreonine is present on Thr-528. Phosphotyrosine is present on Tyr-536.

It belongs to the protein kinase superfamily. Ser/Thr protein kinase family. CRK subfamily.

It localises to the membrane. It carries out the reaction L-seryl-[protein] + ATP = O-phospho-L-seryl-[protein] + ADP + H(+). It catalyses the reaction L-threonyl-[protein] + ATP = O-phospho-L-threonyl-[protein] + ADP + H(+). The sequence is that of Cysteine-rich receptor-like protein kinase 28 (CRK28) from Arabidopsis thaliana (Mouse-ear cress).